The primary structure comprises 183 residues: Probable chemoreceptor glutamine deamidase CheD (183 aa).

Belongs to the CheD family.

The catalysed reaction is L-glutaminyl-[protein] + H2O = L-glutamyl-[protein] + NH4(+). Functionally, probably deamidates glutamine residues to glutamate on methyl-accepting chemotaxis receptors (MCPs), playing an important role in chemotaxis. The sequence is that of Probable chemoreceptor glutamine deamidase CheD from Sinorhizobium medicae (strain WSM419) (Ensifer medicae).